We begin with the raw amino-acid sequence, 251 residues long: Probable transcriptional regulatory protein Cpar_0525 (251 aa).

This sequence belongs to the TACO1 family.

It localises to the cytoplasm. This is Probable transcriptional regulatory protein Cpar_0525 from Chlorobaculum parvum (strain DSM 263 / NCIMB 8327) (Chlorobium vibrioforme subsp. thiosulfatophilum).